Reading from the N-terminus, the 386-residue chain is 2-isopropylmalate synthase (386 aa).

The Pyruvate carboxyltransferase domain occupies valine 12–tyrosine 265. A divalent metal cation contacts are provided by aspartate 21, histidine 203, histidine 205, and asparagine 239.

This sequence belongs to the alpha-IPM synthase/homocitrate synthase family. As to quaternary structure, homodimer. A divalent metal cation serves as cofactor.

The enzyme catalyses 3-methyl-2-oxobutanoate + acetyl-CoA + H2O = (2S)-2-isopropylmalate + CoA + H(+). The protein operates within amino-acid biosynthesis; L-leucine biosynthesis; L-leucine from 3-methyl-2-oxobutanoate: step 1/4. Its activity is regulated as follows. Is not inhibited by leucine. Catalyzes the condensation of the acetyl group of acetyl-CoA with 3-methyl-2-oxobutanoate (2-oxoisovalerate) to form 3-carboxy-3-hydroxy-4-methylpentanoate (2-isopropylmalate). Carries out the first step of the leucine biosynthesis pathway. Also displays a low citramalate synthase activity, using pyruvate as substrate, but is unable to use 2-oxoglutarate. This is 2-isopropylmalate synthase from Sulfolobus acidocaldarius (strain ATCC 33909 / DSM 639 / JCM 8929 / NBRC 15157 / NCIMB 11770).